The chain runs to 62 residues: Coiled-coil domain-containing protein YLR146W-A (62 aa).

A coiled-coil region spans residues 14 to 49; it reads EHARMLQNEIQQLFAQLRDTNSQIRCDLNEFEQIKE.

In Saccharomyces cerevisiae (strain ATCC 204508 / S288c) (Baker's yeast), this protein is Coiled-coil domain-containing protein YLR146W-A.